A 398-amino-acid polypeptide reads, in one-letter code: Putative F-box protein At1g67450 (398 aa).

Residues 2–56 (TMMMSDLPNDLVEEILSRVPITSLGAVRSTCKRWNGLSKDRIVCKGDANQQFTGF) enclose the F-box domain.

This chain is Putative F-box protein At1g67450, found in Arabidopsis thaliana (Mouse-ear cress).